The primary structure comprises 246 residues: MYTRYSYNPSLGRTYVYDNKYYKNLGSVIKNANRKRHYIEHELEEKTLDPLDRYLVAEDPFLGPGKNQKLTLFKEIRNVKPDTMKLVVNWSGKEFLRETWTRFMEDSFPIVNDQEVMDVFLVINMRPTRPNRCFKFLAQHALRCDPDYVPHEVIRIVEPSYVGSNNEYRVSLAKRGGGCPVMNLHSEYTNSFEEFINRVIWENFYKPIVYVGTDSAEEEEILLEVSLVFKIKEFAPDAPLYNGPAY.

Belongs to the polyhedrin family.

Major component of the virus occlusion bodies, which are large proteinaceous structures (polyhedra), that protect the virus from the outside environment for extended periods until they are ingested by insect larvae. In Mamestra brassicae nuclear polyhedrosis virus (MbNPV), this protein is Polyhedrin (PH).